We begin with the raw amino-acid sequence, 150 residues long: Cytochrome c oxidase subunit 5A, mitochondrial (150 aa).

Residues 1–41 constitute a mitochondrion transit peptide; it reads MLGAALRRCAVAATSRAGPRGLLHSAPNPGPAAAIQSVRCY. The short motif at 2 to 17 is the SIFI-degron element; sequence LGAALRRCAVAATSRA. An N6-acetyllysine mark is found at Lys87 and Lys113. Thr141 is subject to Phosphothreonine.

It belongs to the cytochrome c oxidase subunit 5A family. As to quaternary structure, component of the cytochrome c oxidase (complex IV, CIV), a multisubunit enzyme composed of 14 subunits. The complex is composed of a catalytic core of 3 subunits MT-CO1, MT-CO2 and MT-CO3, encoded in the mitochondrial DNA, and 11 supernumerary subunits COX4I, COX5A, COX5B, COX6A, COX6B, COX6C, COX7A, COX7B, COX7C, COX8 and NDUFA4, which are encoded in the nuclear genome. The complex exists as a monomer or a dimer and forms supercomplexes (SCs) in the inner mitochondrial membrane with NADH-ubiquinone oxidoreductase (complex I, CI) and ubiquinol-cytochrome c oxidoreductase (cytochrome b-c1 complex, complex III, CIII), resulting in different assemblies (supercomplex SCI(1)III(2)IV(1) and megacomplex MCI(2)III(2)IV(2)). Interacts with AFG1L. Interacts with RAB5IF. In terms of processing, in response to mitochondrial stress, the precursor protein is ubiquitinated by the SIFI complex in the cytoplasm before mitochondrial import, leading to its degradation. Within the SIFI complex, UBR4 initiates ubiquitin chain that are further elongated or branched by KCMF1.

It localises to the mitochondrion inner membrane. Its pathway is energy metabolism; oxidative phosphorylation. Its function is as follows. Component of the cytochrome c oxidase, the last enzyme in the mitochondrial electron transport chain which drives oxidative phosphorylation. The respiratory chain contains 3 multisubunit complexes succinate dehydrogenase (complex II, CII), ubiquinol-cytochrome c oxidoreductase (cytochrome b-c1 complex, complex III, CIII) and cytochrome c oxidase (complex IV, CIV), that cooperate to transfer electrons derived from NADH and succinate to molecular oxygen, creating an electrochemical gradient over the inner membrane that drives transmembrane transport and the ATP synthase. Cytochrome c oxidase is the component of the respiratory chain that catalyzes the reduction of oxygen to water. Electrons originating from reduced cytochrome c in the intermembrane space (IMS) are transferred via the dinuclear copper A center (CU(A)) of subunit 2 and heme A of subunit 1 to the active site in subunit 1, a binuclear center (BNC) formed by heme A3 and copper B (CU(B)). The BNC reduces molecular oxygen to 2 water molecules using 4 electrons from cytochrome c in the IMS and 4 protons from the mitochondrial matrix. This is Cytochrome c oxidase subunit 5A, mitochondrial (COX5A) from Saguinus labiatus (Red-chested mustached tamarin).